A 437-amino-acid polypeptide reads, in one-letter code: MTVTVETLEKLERKITLTLPVGTIQSEVDSRLKKLARTVKMDGFRPGKVPMNVVAQRYGYSVHYEVMNDKVGEAFSQAANEAKLRVAGQPRITEKEESPEGQLAFDAVFEVFPEVKINDLSNAEVEKLSAEVGEDAIDKTLDILRKQRRTFAQRAQDAVAQDDDRVTVDFEGKIDGEPFPGGKAEDFQFIVGEGQMLKEFEDAVRGMKAGDSRTFPLSFPADYHGKDVAGKQADFMVTVKKIEASHLPEVNEQLAKSLGIAEATVEGLRADIKKNLEREVKFRLLARNKNAVMDTLVANAELDLPNASVQSEVNRMVEGARAELKQRGIKDADKAPIPDEVFRPQAERRVRLGLVVAELVRANNLQAKPEQIKAHIDELAASYEKPADVVRWYFSDNNRLAEVEAVVIENNVTDFVLGKAKVKEKSVSFDELMAQQG.

The PPIase FKBP-type domain maps to 163-248 (DDRVTVDFEG…VKKIEASHLP (86 aa)).

The protein belongs to the FKBP-type PPIase family. Tig subfamily.

It localises to the cytoplasm. It carries out the reaction [protein]-peptidylproline (omega=180) = [protein]-peptidylproline (omega=0). Its function is as follows. Involved in protein export. Acts as a chaperone by maintaining the newly synthesized protein in an open conformation. Functions as a peptidyl-prolyl cis-trans isomerase. This Variovorax paradoxus (strain S110) protein is Trigger factor.